The primary structure comprises 400 residues: Enoyl-[acyl-carrier-protein] reductase [NADH] (400 aa).

NAD(+) is bound by residues 48–53 (GASTGY), 74–75 (FE), 111–112 (DA), and 139–140 (LA). Position 225 (tyrosine 225) interacts with substrate. The active-site Proton donor is the tyrosine 235. Residues lysine 244 and 273–275 (VVT) contribute to the NAD(+) site.

This sequence belongs to the TER reductase family. As to quaternary structure, monomer.

It catalyses the reaction a 2,3-saturated acyl-[ACP] + NAD(+) = a (2E)-enoyl-[ACP] + NADH + H(+). It participates in lipid metabolism; fatty acid biosynthesis. In terms of biological role, involved in the final reduction of the elongation cycle of fatty acid synthesis (FAS II). Catalyzes the reduction of a carbon-carbon double bond in an enoyl moiety that is covalently linked to an acyl carrier protein (ACP). The chain is Enoyl-[acyl-carrier-protein] reductase [NADH] from Burkholderia cenocepacia (strain HI2424).